Reading from the N-terminus, the 331-residue chain is Centriolar satellite-associated tubulin polyglutamylase complex regulator 1 (331 aa).

The segment at 1 to 111 (MLSPERLALP…HCLLQLLCPD (111 aa)) is required for interaction with PCM1. Residues 1–225 (MLSPERLALP…SCPPPALVKE (225 aa)) form a required for interaction with TPGS1, LRRC49, and TTLL1 region. The interval 112 to 331 (FPLELTQKAA…STEETDESET (220 aa)) is required for interaction with TPGS2. Residues 292–331 (SCLPSRTPPRVGSPWKPLHRSRKLDAESDGSTEETDESET) form a disordered region. A compositionally biased stretch (acidic residues) spans 318-331 (ESDGSTEETDESET). Position 319 is a phosphoserine (serine 319).

Belongs to the CSTPP1 family. In terms of assembly, interacts with PCM1. Interacts with TTLL1, TPGS1, TPGS2 and LRRC49; the interactions link CSTPP1 to the complex TPGC. Binds to alpha-tubulin.

The protein resides in the cytoplasm. Its subcellular location is the cytoskeleton. It is found in the microtubule organizing center. The protein localises to the centrosome. It localises to the centriolar satellite. Regulator of the tubulin polyglutamylase complex (TPGC) that controls cytoskeletal organization, nuclear shape, and cilium disassembly by balancing microtubule and actin assembly. Regulates the assembly and stability of the TPGC and thereby modulates polyglutamylation of the microtubule, which antagonizes MAP4 binding. The chain is Centriolar satellite-associated tubulin polyglutamylase complex regulator 1 from Mus musculus (Mouse).